Here is a 761-residue protein sequence, read N- to C-terminus: Nitrogen fixation protein FixI (761 aa).

At 1–120 the chain is on the cytoplasmic side; sequence MSCCTMDAES…SAPESDKTRN (120 aa). Residues 36–106 enclose the HMA domain; that stretch reads RQLDLSVSDV…EINSAGYRAH (71 aa). Residues Cys47 and Cys50 each contribute to the a metal cation site. A helical membrane pass occupies residues 121 to 142; that stretch reads QLLLAIGVSGFAAPNIMLLSVS. At 143-155 the chain is on the extracellular side; it reads VWSGADAATRDMF. Residues 156–177 traverse the membrane as a helical segment; it reads HWISAMIAAPALVYAGRFFFKS. The Cytoplasmic portion of the chain corresponds to 178–184; it reads AWNALRH. The helical transmembrane segment at 185–205 threads the bilayer; sequence GRTNMDVPISVTVSLSYAVSL. Residues 206-217 lie on the Extracellular side of the membrane; sequence WETVHHGEHAWF. The chain crosses the membrane as a helical span at residues 218-238; it reads DASVSLLFFLLIGRTLDHIMR. The Cytoplasmic portion of the chain corresponds to 239–367; it reads EKARAAINGL…RARYRRIADR (129 aa). Residues 368 to 390 traverse the membrane as a helical segment; the sequence is AATLYSPVVHLLALVSFLAWGFL. Over 391-395 the chain is Extracellular; sequence GGDWK. The helical transmembrane segment at 396 to 415 threads the bilayer; the sequence is QAMLVAVAVLIITCPCALGL. The Cytoplasmic segment spans residues 416-691; the sequence is AVPVVQVVAA…AVARRSASLI (276 aa). The active-site 4-aspartylphosphate intermediate is Asp453. Mg(2+) contacts are provided by Asp637 and Asp641. The helical transmembrane segment at 692 to 711 threads the bilayer; sequence RQNFALAIGYNVLAVPIAIA. Over 712 to 716 the chain is Extracellular; that stretch reads GLATP. The helical transmembrane segment at 717–735 threads the bilayer; it reads LIAAVAMSTSSIIVVTNAL. Over 736 to 761 the chain is Cytoplasmic; that stretch reads RLNGFGKRPDMHIRRGIGRSAEVKAA.

It belongs to the cation transport ATPase (P-type) (TC 3.A.3) family. Type IB subfamily.

The protein localises to the cell membrane. The enzyme catalyses ATP + H2O = ADP + phosphate + H(+). Its function is as follows. FixI is a pump of a specific cation involved in symbiotic nitrogen fixation. The four proteins FixG, FixH, FixI, and FixS may participate in a membrane-bound complex coupling the FixI cation pump with a redox process catalyzed by FixG. The polypeptide is Nitrogen fixation protein FixI (fixI) (Rhizobium leguminosarum bv. viciae).